A 215-amino-acid polypeptide reads, in one-letter code: Ribonuclease T (215 aa).

The Exonuclease domain maps to 20–194 (VVIDVETAGF…YDTEQTAQLF (175 aa)). Mg(2+) contacts are provided by Asp-23, Glu-25, His-181, and Asp-186. His-181 acts as the Proton donor/acceptor in catalysis.

It belongs to the RNase T family. As to quaternary structure, homodimer. Mg(2+) serves as cofactor.

Its function is as follows. Trims short 3' overhangs of a variety of RNA species, leaving a one or two nucleotide 3' overhang. Responsible for the end-turnover of tRNA: specifically removes the terminal AMP residue from uncharged tRNA (tRNA-C-C-A). Also appears to be involved in tRNA biosynthesis. The protein is Ribonuclease T of Klebsiella pneumoniae subsp. pneumoniae (strain ATCC 700721 / MGH 78578).